Reading from the N-terminus, the 523-residue chain is Nuclear receptor ROR-alpha (523 aa).

Residues 1–26 (MESAPAAPDPAASEPGSSGADAAAGS) are compositionally biased toward low complexity. Residues 1 to 63 (MESAPAAPDP…SRGISVTKKT (63 aa)) are disordered. An N6-methyllysine modification is found at K38. Residues 48–57 (QSYSSTSRGI) show a composition bias toward polar residues. NR C4-type zinc fingers lie at residues 73-93 (CKIC…CEGC) and 109-133 (CPRQ…LQKC). Positions 73 to 138 (CKICGDKSSG…RLQKCLAVGM (66 aa)) form a DNA-binding region, nuclear receptor. The segment at 154–183 (DSLYAEVQKHRMQQQQRDHQQQPGEAEPLT) is disordered. T183 is modified (phosphothreonine; by MAPK1). A Glycyl lysine isopeptide (Lys-Gly) (interchain with G-Cter in SUMO) cross-link involves residue K240. The NR LBD domain maps to 272–510 (ELEHLAQNIS…LHFPPLYKEL (239 aa)). An AF-2 motif is present at residues 506-523 (LYKELFTSEFEPAMQIDG).

This sequence belongs to the nuclear hormone receptor family. NR1 subfamily. In terms of assembly, monomer. Interacts (via the DNA-binding domain) with HIF1A; the interaction enhances HIF1A transcription under hypoxia through increasing protein stability. Interacts with CEBPB; the interaction disrupts the interaction CEBPB:EP300. Interacts with the coactivators NCOA2, PPARGC1A (via LXXLL motif), EP300 and MED1. Interacts with the corepressor NCOR1. Interacts with MAGED1 and CTNNB1. Interacts with CRY1 and PER2. Interacts (via AF-2 motif) with PROX1. Interacts with NRIP1. Isoform 4 interacts (via AF-2 motif) with isoform 1 of FOXP3 (via LXXLL motif). Phosphorylation by conventional PKCs in neurons inhibits transcriptional activity. Phosphorylated on Thr-183 by MAPK1/ERK1 in vitro. In terms of processing, sumoylated by SENP1 and SENP2. Sumoylation, promoted by PIAS2, PIAS3, PIAS4 but not PIAS1, enhances the transcriptional activity. Desumoylated by SENP1. Post-translationally, ubiquitinated, leading to its degradation by the proteasome. Proteasomal degradation is required for efficient transcriptional activity and is prevented by HR. Monomethylated at Lys-38 by EZH2, this creates a degron recognized by a DCX (DDB1-DCAF1/VPRBP-CUL4A-RBX1) E3 ubiquitin ligase complex. As to expression, widely expressed in a number of tissues. Expressed in both regulatory T-cells (Treg) and effector T-cells (Teff). Isoform 4: Highly expressed in the central nervous system, including in the cerebellum.

It localises to the nucleus. Nuclear receptor that binds DNA as a monomer to ROR response elements (RORE) containing a single core motif half-site 5'-AGGTCA-3' preceded by a short A-T-rich sequence. Key regulator of embryonic development, cellular differentiation, immunity, circadian rhythm as well as lipid, steroid, xenobiotics and glucose metabolism. Considered to have intrinsic transcriptional activity, have some natural ligands like oxysterols that act as agonists (25-hydroxycholesterol) or inverse agonists (7-oxygenated sterols), enhancing or repressing the transcriptional activity, respectively. Recruits distinct combinations of cofactors to target genes regulatory regions to modulate their transcriptional expression, depending on the tissue, time and promoter contexts. Regulates genes involved in photoreceptor development including OPN1SW, OPN1SM and ARR3 and skeletal muscle development with MYOD1. Required for proper cerebellum development. Regulates SHH gene expression, among others, to induce granule cells proliferation as well as expression of genes involved in calcium-mediated signal transduction. Regulates the circadian expression of several clock genes, including CLOCK, BMAL1, NPAS2 and CRY1. Competes with NR1D1 for binding to their shared DNA response element on some clock genes such as BMAL1, CRY1 and NR1D1 itself, resulting in NR1D1-mediated repression or RORA-mediated activation of clock genes expression, leading to the circadian pattern of clock genes expression. Therefore influences the period length and stability of the clock. Regulates genes involved in lipid metabolism such as apolipoproteins APOA1, APOA5, APOC3 and PPARG. In liver, has specific and redundant functions with RORC as positive or negative modulator of expression of genes encoding phase I and phase II proteins involved in the metabolism of lipids, steroids and xenobiotics, such as CYP7B1 and SULT2A1. Induces a rhythmic expression of some of these genes. In addition, interplays functionally with NR1H2 and NR1H3 for the regulation of genes involved in cholesterol metabolism. Also involved in the regulation of hepatic glucose metabolism through the modulation of G6PC1 and PCK1. In adipose tissue, plays a role as negative regulator of adipocyte differentiation, probably acting through dual mechanisms. May suppress CEBPB-dependent adipogenesis through direct interaction and PPARG-dependent adipogenesis through competition for DNA-binding. Downstream of IL6 and TGFB and synergistically with RORC isoform 2, is implicated in the lineage specification of uncommitted CD4(+) T-helper (T(H)) cells into T(H)17 cells, antagonizing the T(H)1 program. Probably regulates IL17 and IL17F expression on T(H) by binding to the essential enhancer conserved non-coding sequence 2 (CNS2) in the IL17-IL17F locus. Involved in hypoxia signaling by interacting with and activating the transcriptional activity of HIF1A. May inhibit cell growth in response to cellular stress. May exert an anti-inflammatory role by inducing CHUK expression and inhibiting NF-kappa-B signaling. The polypeptide is Nuclear receptor ROR-alpha (RORA) (Homo sapiens (Human)).